The chain runs to 298 residues: Serine/threonine-protein kinase 1 (298 aa).

The 239-residue stretch at 38 to 276 (FIATRPMFEG…FKSLVSHPWF (239 aa)) folds into the Protein kinase domain. ATP is bound by residues 45–53 (FEGGRNNVF) and Lys65. Catalysis depends on Asp152, which acts as the Proton acceptor.

This sequence belongs to the protein kinase superfamily. Ser/Thr protein kinase family.

It localises to the virion. Its subcellular location is the host cytoplasm. The enzyme catalyses L-seryl-[protein] + ATP = O-phospho-L-seryl-[protein] + ADP + H(+). It carries out the reaction L-threonyl-[protein] + ATP = O-phospho-L-threonyl-[protein] + ADP + H(+). Essential for viral replication. It may mediate the virus progression through DNA replication. This African swine fever virus (strain Badajoz 1971 Vero-adapted) (Ba71V) protein is Serine/threonine-protein kinase 1.